A 356-amino-acid polypeptide reads, in one-letter code: tRNA N6-adenosine threonylcarbamoyltransferase (356 aa).

Fe cation-binding residues include histidine 115 and histidine 119. Residues 138–142 (LVSGG), aspartate 171, glycine 184, and asparagine 283 each bind substrate. Position 311 (aspartate 311) interacts with Fe cation.

The protein belongs to the KAE1 / TsaD family. Fe(2+) is required as a cofactor.

The protein resides in the cytoplasm. It carries out the reaction L-threonylcarbamoyladenylate + adenosine(37) in tRNA = N(6)-L-threonylcarbamoyladenosine(37) in tRNA + AMP + H(+). Functionally, required for the formation of a threonylcarbamoyl group on adenosine at position 37 (t(6)A37) in tRNAs that read codons beginning with adenine. Is involved in the transfer of the threonylcarbamoyl moiety of threonylcarbamoyl-AMP (TC-AMP) to the N6 group of A37, together with TsaE and TsaB. TsaD likely plays a direct catalytic role in this reaction. This is tRNA N6-adenosine threonylcarbamoyltransferase from Prochlorococcus marinus (strain NATL2A).